Consider the following 452-residue polypeptide: FAD-linked oxidoreductase DDB_G0289697 (452 aa).

The FAD-binding PCMH-type domain maps to 44 to 212; that stretch reads VVNTPLLIVY…TDFTFKLHPV (169 aa). His81 carries the post-translational modification Pros-8alpha-FAD histidine.

Belongs to the oxygen-dependent FAD-linked oxidoreductase family. FAD serves as cofactor.

The polypeptide is FAD-linked oxidoreductase DDB_G0289697 (Dictyostelium discoideum (Social amoeba)).